The following is an 84-amino-acid chain: uncharacterized protein (84 aa).

The next 2 helical transmembrane spans lie at 27-47 (INHH…LAML) and 52-72 (IGHV…FVLI).

To M.tuberculosis Rv2876.

The protein localises to the cell membrane. This is an uncharacterized protein from Mycobacterium leprae (strain TN).